A 140-amino-acid polypeptide reads, in one-letter code: Endoribonuclease YbeY (140 aa).

Zn(2+) contacts are provided by histidine 100, histidine 104, and histidine 110.

The protein belongs to the endoribonuclease YbeY family. It depends on Zn(2+) as a cofactor.

Its subcellular location is the cytoplasm. Functionally, single strand-specific metallo-endoribonuclease involved in late-stage 70S ribosome quality control and in maturation of the 3' terminus of the 16S rRNA. In Helicobacter pylori (strain ATCC 700392 / 26695) (Campylobacter pylori), this protein is Endoribonuclease YbeY.